The primary structure comprises 250 residues: Coproheme decarboxylase (250 aa).

Residues Arg131, 145-149 (YPMNK), His172, and Gln185 contribute to the Fe-coproporphyrin III site. The active site involves Tyr145.

The protein belongs to the ChdC family. Type 1 subfamily. Fe-coproporphyrin III serves as cofactor.

It carries out the reaction Fe-coproporphyrin III + 2 H2O2 + 2 H(+) = heme b + 2 CO2 + 4 H2O. It catalyses the reaction Fe-coproporphyrin III + H2O2 + H(+) = harderoheme III + CO2 + 2 H2O. The catalysed reaction is harderoheme III + H2O2 + H(+) = heme b + CO2 + 2 H2O. The protein operates within porphyrin-containing compound metabolism; protoheme biosynthesis. Functionally, involved in coproporphyrin-dependent heme b biosynthesis. Catalyzes the decarboxylation of Fe-coproporphyrin III (coproheme) to heme b (protoheme IX), the last step of the pathway. The reaction occurs in a stepwise manner with a three-propionate intermediate. This is Coproheme decarboxylase from Staphylococcus aureus (strain MRSA252).